The primary structure comprises 471 residues: Ribulose bisphosphate carboxylase large chain (471 aa).

The substrate site is built by Asn-115 and Thr-165. Lys-167 functions as the Proton acceptor in the catalytic mechanism. Position 169 (Lys-169) interacts with substrate. Mg(2+) contacts are provided by Lys-193, Asp-195, and Glu-196. An N6-carboxylysine modification is found at Lys-193. The Proton acceptor role is filled by His-286. Residues Arg-287, His-319, and Ser-371 each coordinate substrate.

Belongs to the RuBisCO large chain family. Type I subfamily. Heterohexadecamer of 8 large chains and 8 small chains. Mg(2+) is required as a cofactor.

It is found in the carboxysome. The enzyme catalyses 2 (2R)-3-phosphoglycerate + 2 H(+) = D-ribulose 1,5-bisphosphate + CO2 + H2O. It catalyses the reaction D-ribulose 1,5-bisphosphate + O2 = 2-phosphoglycolate + (2R)-3-phosphoglycerate + 2 H(+). Its function is as follows. RuBisCO catalyzes two reactions: the carboxylation of D-ribulose 1,5-bisphosphate, the primary event in carbon dioxide fixation, as well as the oxidative fragmentation of the pentose substrate in the photorespiration process. Both reactions occur simultaneously and in competition at the same active site. The polypeptide is Ribulose bisphosphate carboxylase large chain (Prochlorococcus marinus (strain MIT 9515)).